The sequence spans 375 residues: N-acetyldiaminopimelate deacetylase (375 aa).

The active site involves D69. The active-site Proton acceptor is E128.

Belongs to the peptidase M20A family. N-acetyldiaminopimelate deacetylase subfamily.

The catalysed reaction is N-acetyl-(2S,6S)-2,6-diaminopimelate + H2O = (2S,6S)-2,6-diaminopimelate + acetate. It participates in amino-acid biosynthesis; L-lysine biosynthesis via DAP pathway; LL-2,6-diaminopimelate from (S)-tetrahydrodipicolinate (acetylase route): step 3/3. Functionally, catalyzes the conversion of N-acetyl-diaminopimelate to diaminopimelate and acetate. In Priestia megaterium (strain ATCC 12872 / QMB1551) (Bacillus megaterium), this protein is N-acetyldiaminopimelate deacetylase.